The sequence spans 329 residues: Small ribosomal subunit protein uS2 (329 aa).

This sequence belongs to the universal ribosomal protein uS2 family.

In Bradyrhizobium sp. (strain ORS 278), this protein is Small ribosomal subunit protein uS2.